Reading from the N-terminus, the 141-residue chain is D-aminoacyl-tRNA deacylase (141 aa).

A Gly-cisPro motif, important for rejection of L-amino acids motif is present at residues 133–134 (GP).

It belongs to the DTD family. As to quaternary structure, homodimer.

Its subcellular location is the cytoplasm. The enzyme catalyses glycyl-tRNA(Ala) + H2O = tRNA(Ala) + glycine + H(+). It catalyses the reaction a D-aminoacyl-tRNA + H2O = a tRNA + a D-alpha-amino acid + H(+). Functionally, an aminoacyl-tRNA editing enzyme that deacylates mischarged D-aminoacyl-tRNAs. Also deacylates mischarged glycyl-tRNA(Ala), protecting cells against glycine mischarging by AlaRS. Acts via tRNA-based rather than protein-based catalysis; rejects L-amino acids rather than detecting D-amino acids in the active site. By recycling D-aminoacyl-tRNA to D-amino acids and free tRNA molecules, this enzyme counteracts the toxicity associated with the formation of D-aminoacyl-tRNA entities in vivo and helps enforce protein L-homochirality. The protein is D-aminoacyl-tRNA deacylase of Nautilia profundicola (strain ATCC BAA-1463 / DSM 18972 / AmH).